Consider the following 101-residue polypeptide: uncharacterized protein (101 aa).

Residues 1 to 12 (MAAFQHRAKRSK) are compositionally biased toward basic residues. Disordered stretches follow at residues 1-30 (MAAFQHRAKRSKNGASAKQGKISKADKKRA) and 65-87 (AQDQRSDAQAQQQRAQERSNVDK). Residues 65-78 (AQDQRSDAQAQQQR) are compositionally biased toward low complexity.

This is an uncharacterized protein from Eremothecium gossypii (strain ATCC 10895 / CBS 109.51 / FGSC 9923 / NRRL Y-1056) (Yeast).